A 238-amino-acid chain; its full sequence is Orotidine 5'-phosphate decarboxylase (238 aa).

Residues aspartate 18, lysine 40, 67–76 (DMKLLDIDNT), threonine 122, arginine 183, glutamine 192, and arginine 213 each bind substrate. Residue lysine 69 is the Proton donor of the active site.

It belongs to the OMP decarboxylase family. Type 1 subfamily. As to quaternary structure, homodimer.

The enzyme catalyses orotidine 5'-phosphate + H(+) = UMP + CO2. It participates in pyrimidine metabolism; UMP biosynthesis via de novo pathway; UMP from orotate: step 2/2. Its function is as follows. Catalyzes the decarboxylation of orotidine 5'-monophosphate (OMP) to uridine 5'-monophosphate (UMP). In Brucella melitensis biotype 2 (strain ATCC 23457), this protein is Orotidine 5'-phosphate decarboxylase.